Consider the following 373-residue polypeptide: Glutamine synthetase (373 aa).

Ala-2 is modified (N-acetylalanine). A required for glutamine-induced ubiquitination by CRL4(CRBN) and proteasomal degradation region spans residues 2–25 (ATSASSHLNKGIKQVYMSLPQGEK). An N6-acetyllysine mark is found at Lys-11 and Lys-14. The 83-residue stretch at 24 to 106 (EKVQAMYIWI…VFCEVFKYNR (83 aa)) folds into the GS beta-grasp domain. Position 104 is a phosphotyrosine (Tyr-104). The GS catalytic domain occupies 113–373 (LRHTCKRIMD…TGDEPFQYKN (261 aa)). Glu-134 contributes to the ATP binding site. Glu-134, Glu-136, Glu-196, and Glu-203 together coordinate Mn(2+). 203-208 (EFQIGP) provides a ligand contact to ATP. Residue 246 to 247 (NW) participates in L-glutamate binding. His-253 contacts Mn(2+). Residues 255-257 (NFS), Arg-319, and Arg-324 each bind ATP. L-glutamate is bound at residue Arg-319. 336–338 (YFE) serves as a coordination point for ADP. Residue Glu-338 participates in Mn(2+) binding. An L-glutamate-binding site is contributed by Arg-340. Ser-343 carries the post-translational modification Phosphoserine.

The protein belongs to the glutamine synthetase family. Decamer; composed of two pentamers. Interacts with PALMD. Interacts with RHOJ. Interacts with BEST2; this interaction tethers a fraction of GLUL to the membrane, causing a decrease of cytosolic glutamine synthase (GS) activity and inhibits the chloride channel activity of BEST2 by affecting the gating at the aperture in the absence of intracellular glutamate. Mg(2+) is required as a cofactor. The cofactor is Mn(2+). Palmitoylated; undergoes autopalmitoylation. In terms of processing, acetylated by EP300/p300; acetylation is stimulated by increased glutamine levels and promotes ubiquitin-mediated proteasomal degradation. Post-translationally, ubiquitinated by ZNRF1. Ubiquitinated by the DCX (DDB1-CUL4-X-box) E3 ubiquitin-protein ligase complex called CRL4(CRBN), leading to proteasomal degradation.

Its subcellular location is the cytoplasm. It is found in the cytosol. It localises to the microsome. The protein resides in the mitochondrion. The protein localises to the cell membrane. The enzyme catalyses L-glutamate + NH4(+) + ATP = L-glutamine + ADP + phosphate + H(+). It carries out the reaction L-cysteinyl-[protein] + hexadecanoyl-CoA = S-hexadecanoyl-L-cysteinyl-[protein] + CoA. Glutamine synthetase activity is inhibited by methionine sulfoximine (MSO). In terms of biological role, glutamine synthetase that catalyzes the ATP-dependent conversion of glutamate and ammonia to glutamine. Its role depends on tissue localization: in the brain, it regulates the levels of toxic ammonia and converts neurotoxic glutamate to harmless glutamine, whereas in the liver, it is one of the enzymes responsible for the removal of ammonia. Plays a key role in ammonium detoxification during erythropoiesis: the glutamine synthetase activity is required to remove ammonium generated by porphobilinogen deaminase (HMBS) during heme biosynthesis to prevent ammonium accumulation and oxidative stress. Essential for proliferation of fetal skin fibroblasts. Independently of its glutamine synthetase activity, required for endothelial cell migration during vascular development. Involved in angiogenesis by regulating membrane localization and activation of the GTPase RHOJ, possibly by promoting RHOJ palmitoylation. May act as a palmitoyltransferase for RHOJ: able to autopalmitoylate and then transfer the palmitoyl group to RHOJ. Plays a role in ribosomal 40S subunit biogenesis. Through the interaction with BEST2, inhibits BEST2 channel activity by affecting the gating at the aperture in the absence of intracellular L-glutamate, but sensitizes BEST2 to intracellular L-glutamate, which promotes the opening of BEST2 and thus relieves its inhibitory effect on BEST2. In Sus scrofa (Pig), this protein is Glutamine synthetase.